A 259-amino-acid chain; its full sequence is Ribosomal RNA small subunit methyltransferase J (259 aa).

Residues Arg-101–Asp-102, Glu-117–Arg-118, Ser-153–Ser-154, and Asp-176 each bind S-adenosyl-L-methionine.

Belongs to the methyltransferase superfamily. RsmJ family.

It localises to the cytoplasm. The enzyme catalyses guanosine(1516) in 16S rRNA + S-adenosyl-L-methionine = N(2)-methylguanosine(1516) in 16S rRNA + S-adenosyl-L-homocysteine + H(+). Functionally, specifically methylates the guanosine in position 1516 of 16S rRNA. The polypeptide is Ribosomal RNA small subunit methyltransferase J (Vibrio campbellii (strain ATCC BAA-1116)).